A 219-amino-acid polypeptide reads, in one-letter code: Response regulator ArlR (219 aa).

One can recognise a Response regulatory domain in the interval 3-116 (NILIVEDEQN…ELFARIRAVL (114 aa)). A 4-aspartylphosphate modification is found at Asp52. The segment at residues 122–219 (KDIIDINGIK…TVRGVGYVIR (98 aa)) is a DNA-binding region (ompR/PhoB-type).

Phosphorylated by ArlS.

The protein resides in the cytoplasm. In terms of biological role, member of the two-component regulatory system ArlS/ArlR. The protein is Response regulator ArlR (arlR) of Staphylococcus haemolyticus (strain JCSC1435).